A 416-amino-acid chain; its full sequence is Serine hydroxymethyltransferase (416 aa).

Residues leucine 118 and 122–124 (GHL) each bind (6S)-5,6,7,8-tetrahydrofolate. Residue lysine 226 is modified to N6-(pyridoxal phosphate)lysine. Residues glutamate 242 and 350-352 (SPF) each bind (6S)-5,6,7,8-tetrahydrofolate.

It belongs to the SHMT family. In terms of assembly, homodimer. The cofactor is pyridoxal 5'-phosphate.

Its subcellular location is the cytoplasm. It carries out the reaction (6R)-5,10-methylene-5,6,7,8-tetrahydrofolate + glycine + H2O = (6S)-5,6,7,8-tetrahydrofolate + L-serine. It functions in the pathway one-carbon metabolism; tetrahydrofolate interconversion. The protein operates within amino-acid biosynthesis; glycine biosynthesis; glycine from L-serine: step 1/1. In terms of biological role, catalyzes the reversible interconversion of serine and glycine with tetrahydrofolate (THF) serving as the one-carbon carrier. This reaction serves as the major source of one-carbon groups required for the biosynthesis of purines, thymidylate, methionine, and other important biomolecules. Also exhibits THF-independent aldolase activity toward beta-hydroxyamino acids, producing glycine and aldehydes, via a retro-aldol mechanism. The sequence is that of Serine hydroxymethyltransferase from Helicobacter acinonychis (strain Sheeba).